The chain runs to 446 residues: O-antigen polymerase (446 aa).

11 helical membrane passes run 11–31, 33–53, 58–78, 104–124, 147–167, 186–206, 211–231, 252–272, 355–375, 391–411, and 415–435; these read ICSYTFFMVNLFILILSVINE, FCEIAYVIISVSSVLFCVIII, QGGFLNPMTFCIISVFFFILI, IYVFYSLAVVNIPLAFTVLLY, QLSMILLWGGLFSAIFLIKSY, LYDELFWFTLSKYCYILSLLF, NFILYSLLIFITSIGYILVGL, LKIKWLLLVAILVTTISSLFL, IYLGWIIGSVALLLFAFSLAF, KLAYTYRLIIFLALPNLIYFA, and LFDFITKVLFIALFIGGLSIV.

It is found in the cell inner membrane. It carries out the reaction n lipid-linked O-antigen repeat units = a lipid-linked O antigen + (n-1) polyisoprenyl diphosphate.. The protein operates within bacterial outer membrane biogenesis; LPS O-antigen biosynthesis. Polymerase involved in the biosynthesis of the lipopolysaccharide (LPS). Catalyzes the polymerization of the O-antigen repeat units on the periplasmic face of the inner membrane, leading to the formation of the lipid-linked O-antigen molecule. In vitro, shows a preference for bacteria-based, undecaprenyl-containing substrates rather than eukaryote-based, dolichol-containing substrates. The sequence is that of O-antigen polymerase from Escherichia coli.